The primary structure comprises 449 residues: Maturation protein A (449 aa).

This sequence belongs to the Leviviricetes maturation protein family. In terms of assembly, interacts with the host pilus.

The protein localises to the virion. The maturation protein is required for the typical attachment of the phage to the side of the bacterial F-pili. Binds to sequences located toward each end of the genome, hence circularizing it. The RNA genome-maturation protein A complex is released from the capsid upon host receptor binding. Maturation protein A enters the cell along with the viral RNA. The protein is Maturation protein A of Pseudomonas aeruginosa (Bacteriophage PP7).